A 161-amino-acid chain; its full sequence is MKYDTSELCDIYQEDVNVVEPLFSNFGGRSSFGGQIITVKCFEDNGLLYDLLEQNGRGRILLVDGGGSVRRALVDAELARLATQNEWEGLVIYGAVRQVDDLEELDIGIQALAAIPVGAAGEGIGESDVRVNFGGVTFFSGDHLYADNTGIILSEDPLDIE.

The protein belongs to the RraA family. As to quaternary structure, homotrimer. Binds to both RNA-binding sites in the C-terminal region of Rne and to RhlB.

The protein resides in the cytoplasm. Globally modulates RNA abundance by binding to RNase E (Rne) and regulating its endonucleolytic activity. Can modulate Rne action in a substrate-dependent manner by altering the composition of the degradosome. Modulates RNA-binding and helicase activities of the degradosome. The polypeptide is Regulator of ribonuclease activity A (Citrobacter koseri (strain ATCC BAA-895 / CDC 4225-83 / SGSC4696)).